A 95-amino-acid polypeptide reads, in one-letter code: Protein TusB (95 aa).

It belongs to the DsrH/TusB family. Heterohexamer, formed by a dimer of trimers. The hexameric TusBCD complex contains 2 copies each of TusB, TusC and TusD. The TusBCD complex interacts with TusE.

Its subcellular location is the cytoplasm. Its function is as follows. Part of a sulfur-relay system required for 2-thiolation of 5-methylaminomethyl-2-thiouridine (mnm(5)s(2)U) at tRNA wobble positions. The sequence is that of Protein TusB from Photorhabdus laumondii subsp. laumondii (strain DSM 15139 / CIP 105565 / TT01) (Photorhabdus luminescens subsp. laumondii).